The chain runs to 89 residues: Small ribosomal subunit protein uS15 (89 aa).

This sequence belongs to the universal ribosomal protein uS15 family. Part of the 30S ribosomal subunit. Forms a bridge to the 50S subunit in the 70S ribosome, contacting the 23S rRNA.

Functionally, one of the primary rRNA binding proteins, it binds directly to 16S rRNA where it helps nucleate assembly of the platform of the 30S subunit by binding and bridging several RNA helices of the 16S rRNA. In terms of biological role, forms an intersubunit bridge (bridge B4) with the 23S rRNA of the 50S subunit in the ribosome. The polypeptide is Small ribosomal subunit protein uS15 (Allorhizobium ampelinum (strain ATCC BAA-846 / DSM 112012 / S4) (Agrobacterium vitis (strain S4))).